The primary structure comprises 347 residues: Quinolinate synthase (347 aa).

Residues histidine 47 and serine 68 each contribute to the iminosuccinate site. Cysteine 113 contacts [4Fe-4S] cluster. Iminosuccinate is bound by residues 139–141 (YAN) and serine 156. A [4Fe-4S] cluster-binding site is contributed by cysteine 200. Residues 226-228 (HPE) and threonine 243 contribute to the iminosuccinate site. Cysteine 297 contacts [4Fe-4S] cluster.

This sequence belongs to the quinolinate synthase family. Type 1 subfamily. Requires [4Fe-4S] cluster as cofactor.

Its subcellular location is the cytoplasm. It carries out the reaction iminosuccinate + dihydroxyacetone phosphate = quinolinate + phosphate + 2 H2O + H(+). Its pathway is cofactor biosynthesis; NAD(+) biosynthesis; quinolinate from iminoaspartate: step 1/1. Functionally, catalyzes the condensation of iminoaspartate with dihydroxyacetone phosphate to form quinolinate. This is Quinolinate synthase from Enterobacter sp. (strain 638).